The chain runs to 528 residues: Na(+)/H(+) antiporter NhaB (528 aa).

Helical transmembrane passes span 23 to 43, 45 to 65, 90 to 110, 136 to 156, 204 to 224, 237 to 257, 305 to 325, 350 to 370, 392 to 412, 450 to 470, and 479 to 499; these read VAIIAFLIINPIVFFLINPFV, GWLLVAEFIFTLAMALKCYPL, LVANIEVLLLLVFMVAGIYFM, CFAAAFLSAFLDALTVIAVVI, LLMHAGVGTALGGVTTMVGEP, FGEFLIRMSPVTLPVFICGLI, GIIAVWLIVALALHLAAVGLI, EEALPFTALLAVFFSIVAVII, LALFYVANGLLSMVSDNVFVG, ATPNGQAAFLFLLTSALAPLI, and VMALPYTVVLAIVGLMGIMFF.

Belongs to the NhaB Na(+)/H(+) (TC 2.A.34) antiporter family.

Its subcellular location is the cell inner membrane. It catalyses the reaction 2 Na(+)(in) + 3 H(+)(out) = 2 Na(+)(out) + 3 H(+)(in). In terms of biological role, na(+)/H(+) antiporter that extrudes sodium in exchange for external protons. Can also transport lithium and potassium. This Vibrio parahaemolyticus serotype O3:K6 (strain RIMD 2210633) protein is Na(+)/H(+) antiporter NhaB.